We begin with the raw amino-acid sequence, 127 residues long: Gamma-synuclein (127 aa).

2 repeat units span residues Glu20–Ala30 and Glu31–Gly41. The tract at residues Glu20 to Ser67 is 4 X 11 AA tandem repeats of [EGSA]-K-T-K-[EQ]-[GQ]-V-X(4). The 3; approximate repeat unit spans residues Thr42–Ala56. Repeat unit 4 spans residues Glu57–Ser67. A phosphoserine mark is found at Ser67 and Ser72. Positions Lys97–Asp127 are disordered. Residue Ser124 is modified to Phosphoserine; by BARK1, CaMK2 and CK2.

It belongs to the synuclein family. May be a centrosome-associated protein. Interacts with MYOC; affects its secretion and its aggregation. In terms of processing, phosphorylated. Phosphorylation by GRK5 appears to occur on residues distinct from the residue phosphorylated by other kinases.

It is found in the cytoplasm. The protein resides in the perinuclear region. It localises to the cytoskeleton. Its subcellular location is the microtubule organizing center. The protein localises to the centrosome. It is found in the spindle. Plays a role in neurofilament network integrity. May be involved in modulating axonal architecture during development and in the adult. In vitro, increases the susceptibility of neurofilament-H to calcium-dependent proteases. May also function in modulating the keratin network in skin. Activates the MAPK and Elk-1 signal transduction pathway. This chain is Gamma-synuclein (SNCG), found in Macaca fascicularis (Crab-eating macaque).